The chain runs to 463 residues: Flotillin-like protein 2 (463 aa).

Residue cysteine 35 is the site of S-palmitoyl cysteine attachment. The stretch at 305 to 354 forms a coiled coil; sequence EYETKVQEANWELYNKQKQAEAVLYEKQKQAEAQKAEADATFYSKQKEAE.

The protein belongs to the band 7/mec-2 family. Flotillin subfamily. May be palmitoylated.

It is found in the cell membrane. The protein localises to the membrane. It localises to the caveola. May act as a scaffolding protein within caveolar membranes, functionally participating in formation of caveolae or caveolae-like vesicles. This Arabidopsis thaliana (Mouse-ear cress) protein is Flotillin-like protein 2 (FLOT2).